The primary structure comprises 97 residues: Large ribosomal subunit protein bL28 (97 aa).

This sequence belongs to the bacterial ribosomal protein bL28 family.

This chain is Large ribosomal subunit protein bL28, found in Brucella ovis (strain ATCC 25840 / 63/290 / NCTC 10512).